The chain runs to 135 residues: Cytochrome c oxidase subunit 2 (135 aa).

Positions 81, 116, 120, and 124 each coordinate Cu cation.

The protein belongs to the cytochrome c oxidase subunit 2 family.

Its subcellular location is the cell membrane. It carries out the reaction 4 Fe(II)-[cytochrome c] + O2 + 8 H(+)(in) = 4 Fe(III)-[cytochrome c] + 2 H2O + 4 H(+)(out). In terms of biological role, subunits I and II form the functional core of the enzyme complex. Electrons originating in cytochrome c are transferred via heme a and Cu(A) to the binuclear center formed by heme a3 and Cu(B). The protein is Cytochrome c oxidase subunit 2 (cbaB) of Thermus thermophilus.